Consider the following 312-residue polypeptide: Probable myosin light chain kinase DDB_G0282429 (312 aa).

Positions 1-28 are disordered; that stretch reads MDRMDSSDEEIDNISDDELQSGDEIEVE. Over residues 7-27 the composition is skewed to acidic residues; sequence SDEEIDNISDDELQSGDEIEV. The 253-residue stretch at 38 to 290 folds into the Protein kinase domain; it reads YILGNEIGRG…FEQCLIHPWV (253 aa). ATP-binding positions include 44 to 52 and K67; that span reads IGRGAFSIV. The active-site Proton acceptor is D158.

It belongs to the protein kinase superfamily. CAMK Ser/Thr protein kinase family. CaMK subfamily.

The enzyme catalyses L-seryl-[myosin light chain] + ATP = O-phospho-L-seryl-[myosin light chain] + ADP + H(+). It carries out the reaction L-threonyl-[myosin light chain] + ATP = O-phospho-L-threonyl-[myosin light chain] + ADP + H(+). With respect to regulation, does not have a calmodulin-binding domain. May phosphorylate a specific serine in the N-terminus of a myosin light chain. This is Probable myosin light chain kinase DDB_G0282429 from Dictyostelium discoideum (Social amoeba).